The following is a 92-amino-acid chain: Protein S100-B (92 aa).

An N-acetylserine modification is found at S2. 2 EF-hand domains span residues 13-48 (DVFH…LEEI) and 49-84 (KEQE…VTTA). A Zn(2+)-binding site is contributed by H16. Residues S19 and E22 each contribute to the Ca(2+) site. Position 26 (H26) interacts with Zn(2+). Residues K27, E32, D62, D64, D66, E68, and E73 each coordinate Ca(2+). Zn(2+)-binding residues include H86 and H91.

This sequence belongs to the S-100 family. In terms of assembly, dimer of either two alpha chains, or two beta chains, or one alpha and one beta chain. The S100B dimer binds two molecules of STK38. Interacts with CACYBP in a calcium-dependent manner. Interacts with ATAD3A; this interaction probably occurs in the cytosol prior to ATAD3A mitochondrial targeting. Interacts with S100A6. The S100B dimer interacts with two molecules of CAPZA1. Interacts with AGER. Interacts with PPP5C (via TPR repeats); the interaction is calcium-dependent and modulates PPP5C activity. Interacts with TPPP; this interaction inhibits TPPP dimerization. Interacts with isoform CLSTN3beta of CLSTN3; interaction promotes secretion. In terms of tissue distribution, although predominant among the water-soluble brain proteins, S100 is also found in a variety of other tissues.

The protein localises to the cytoplasm. Its subcellular location is the nucleus. The protein resides in the secreted. In terms of biological role, small zinc- and- and calcium-binding protein that is highly expressed in astrocytes and constitutes one of the most abundant soluble proteins in brain. Weakly binds calcium but binds zinc very tightly-distinct binding sites with different affinities exist for both ions on each monomer. Physiological concentrations of potassium ion antagonize the binding of both divalent cations, especially affecting high-affinity calcium-binding sites. Acts as a neurotrophic factor that promotes astrocytosis and axonal proliferation. Involved in innervation of thermogenic adipose tissue by acting as an adipocyte-derived neurotrophic factor that promotes sympathetic innervation of adipose tissue. Binds to and initiates the activation of STK38 by releasing autoinhibitory intramolecular interactions within the kinase. Interaction with AGER after myocardial infarction may play a role in myocyte apoptosis by activating ERK1/2 and p53/TP53 signaling. Could assist ATAD3A cytoplasmic processing, preventing aggregation and favoring mitochondrial localization. May mediate calcium-dependent regulation on many physiological processes by interacting with other proteins, such as TPR-containing proteins, and modulating their activity. This chain is Protein S100-B, found in Rattus norvegicus (Rat).